The chain runs to 319 residues: Acetyl-coenzyme A carboxylase carboxyl transferase subunit alpha (319 aa).

Residues 35–292 (EISKLMRRLV…KKTIAEALAE (258 aa)) enclose the CoA carboxyltransferase C-terminal domain.

The protein belongs to the AccA family. As to quaternary structure, acetyl-CoA carboxylase is a heterohexamer composed of biotin carboxyl carrier protein (AccB), biotin carboxylase (AccC) and two subunits each of ACCase subunit alpha (AccA) and ACCase subunit beta (AccD).

It localises to the cytoplasm. It carries out the reaction N(6)-carboxybiotinyl-L-lysyl-[protein] + acetyl-CoA = N(6)-biotinyl-L-lysyl-[protein] + malonyl-CoA. Its pathway is lipid metabolism; malonyl-CoA biosynthesis; malonyl-CoA from acetyl-CoA: step 1/1. Component of the acetyl coenzyme A carboxylase (ACC) complex. First, biotin carboxylase catalyzes the carboxylation of biotin on its carrier protein (BCCP) and then the CO(2) group is transferred by the carboxyltransferase to acetyl-CoA to form malonyl-CoA. The sequence is that of Acetyl-coenzyme A carboxylase carboxyl transferase subunit alpha from Desulfitobacterium hafniense (strain DSM 10664 / DCB-2).